Consider the following 476-residue polypeptide: FAD-dependent monooxygenase dpasE (476 aa).

The first 21 residues, Met-1–Ala-21, serve as a signal peptide directing secretion. The FAD site is built by Glu-35, Ala-49, and Arg-109. N-linked (GlcNAc...) asparagine glycosylation is found at Asn-190 and Asn-219. Residues Asp-308 and Ala-321 each contribute to the FAD site. The helical transmembrane segment at Gly-441–Met-461 threads the bilayer.

This sequence belongs to the paxM FAD-dependent monooxygenase family. FAD serves as cofactor.

The protein resides in the membrane. The protein operates within secondary metabolite biosynthesis; terpenoid biosynthesis. Its function is as follows. FAD-dependent monooxygenase; part of the gene cluster that mediates the biosynthesis of the diterpenoid pyrones subglutinols A and B. The first step of the pathway is the synthesis of the alpha-pyrone moiety by the polyketide synthase dpasA via condensation of one acetyl-CoA starter unit with 3 malonyl-CoA units and 2 methylations. The alpha-pyrone is then combined with geranylgeranyl pyrophosphate (GGPP) formed by the GGPP synthase dpasD through the action of the prenyltransferase dpasC to yield a linear alpha-pyrone diterpenoid. Subsequent steps in the diterpenoid pyrone biosynthetic pathway involve the decalin core formation, which is initiated by the epoxidation of the C10-C11 olefin by the FAD-dependent oxidoreductase dpasE, and is followed by a cyclization cascade catalyzed by the terpene cyclase dpasB. The FAD-linked oxidoreductase dpasF is then involved in tetrahydrofuran (THF) ring formation at the C5 unit to complete the formation of subglutinols A and B. DpasF possesses also an additional catalytic ability of multi-step oxidations to generate a new DDP analog with an enone system at the C5 named FDDP A. This is FAD-dependent monooxygenase dpasE from Apiospora sacchari (Arthrinium sacchari).